The primary structure comprises 774 residues: Polymerase basic protein 2 (774 aa).

Belongs to the influenza viruses PB2 family. As to quaternary structure, influenza RNA polymerase is composed of three subunits: PB1, PB2 and PA. Interacts (via N-terminus) with PB1 (via C-terminus). Interacts with nucleoprotein NP (via N-terminus).

Its subcellular location is the virion. It is found in the host nucleus. Functionally, plays an essential role in transcription initiation and cap-stealing mechanism, in which cellular capped pre-mRNAs are used to generate primers for viral transcription. Recognizes and binds a wide range of cap structures of target pre-RNAs which are subsequently cleaved after 10-13 nucleotides by the viral protein PA. Plays a role in the initiation of the viral genome replication and modulates the activity of the ribonucleoprotein (RNP) complex. The chain is Polymerase basic protein 2 from Influenza C virus (strain C/Berlin/1/1985).